Consider the following 401-residue polypeptide: Imidazolonepropionase (401 aa).

The Fe(3+) site is built by H70 and H72. Residues H70 and H72 each coordinate Zn(2+). 4-imidazolone-5-propanoate contacts are provided by R79, Y142, and H175. Y142 serves as a coordination point for N-formimidoyl-L-glutamate. H240 lines the Fe(3+) pocket. H240 serves as a coordination point for Zn(2+). Residue Q243 participates in 4-imidazolone-5-propanoate binding. D315 serves as a coordination point for Fe(3+). Zn(2+) is bound at residue D315. N-formimidoyl-L-glutamate is bound by residues N317 and G319. S320 serves as a coordination point for 4-imidazolone-5-propanoate.

This sequence belongs to the metallo-dependent hydrolases superfamily. HutI family. Requires Zn(2+) as cofactor. The cofactor is Fe(3+).

Its subcellular location is the cytoplasm. The catalysed reaction is 4-imidazolone-5-propanoate + H2O = N-formimidoyl-L-glutamate. The protein operates within amino-acid degradation; L-histidine degradation into L-glutamate; N-formimidoyl-L-glutamate from L-histidine: step 3/3. In terms of biological role, catalyzes the hydrolytic cleavage of the carbon-nitrogen bond in imidazolone-5-propanoate to yield N-formimidoyl-L-glutamate. It is the third step in the universal histidine degradation pathway. This is Imidazolonepropionase from Ruegeria pomeroyi (strain ATCC 700808 / DSM 15171 / DSS-3) (Silicibacter pomeroyi).